The following is a 187-amino-acid chain: Oligoribonuclease (187 aa).

One can recognise an Exonuclease domain in the interval 7–170 (LCWLDMEMTG…DDILESIEEM (164 aa)). Residue tyrosine 128 is part of the active site.

Belongs to the oligoribonuclease family.

It is found in the cytoplasm. 3'-to-5' exoribonuclease specific for small oligoribonucleotides. This Neisseria meningitidis serogroup C / serotype 2a (strain ATCC 700532 / DSM 15464 / FAM18) protein is Oligoribonuclease.